Reading from the N-terminus, the 137-residue chain is Nucleoside diphosphate kinase (137 aa).

Positions 11, 59, 87, 93, 104, and 114 each coordinate ATP. H117 functions as the Pros-phosphohistidine intermediate in the catalytic mechanism.

It belongs to the NDK family. In terms of assembly, homotetramer. Requires Mg(2+) as cofactor.

It localises to the cytoplasm. It catalyses the reaction a 2'-deoxyribonucleoside 5'-diphosphate + ATP = a 2'-deoxyribonucleoside 5'-triphosphate + ADP. The catalysed reaction is a ribonucleoside 5'-diphosphate + ATP = a ribonucleoside 5'-triphosphate + ADP. In terms of biological role, major role in the synthesis of nucleoside triphosphates other than ATP. The ATP gamma phosphate is transferred to the NDP beta phosphate via a ping-pong mechanism, using a phosphorylated active-site intermediate. The sequence is that of Nucleoside diphosphate kinase from Frankia alni (strain DSM 45986 / CECT 9034 / ACN14a).